The following is a 636-amino-acid chain: Chaperone protein DnaK (636 aa).

The disordered stretch occupies residues Glu-579 to Asn-636. A compositionally biased stretch (low complexity) spans Ala-590–Gln-623.

Belongs to the heat shock protein 70 family.

Acts as a chaperone. This Nitrosopumilus maritimus (strain SCM1) protein is Chaperone protein DnaK.